Here is a 230-residue protein sequence, read N- to C-terminus: MGEEGFLAHFAFSIGGLPITQSVLTTWFIMISLFIMAWSTTYKCSLLQPSTYQLLWEGVLSTMYDAIKEVLPDHVELIFPFVATLWIFILVSNLIGVIPGFYSPTADLSVTASLAMMTFLSVHWFGIRAEGWREYLKHYIKPTPFLLPFHLISEISRTLALAVRLFGNIMSLQLTALIVLMIAGFLVPIPILILHIIEAIIQAYIFGMLALIYIAGGIQAHELKSQGESL.

5 helical membrane-spanning segments follow: residues 17-37, 78-98, 107-127, 165-187, and 198-218; these read LPIT…FIMA, IFPF…IGVI, DLSV…WFGI, LFGN…GFLV, and EAII…AGGI.

Belongs to the ATPase A chain family. As to quaternary structure, F-type ATPases have 2 components, CF(1) - the catalytic core - and CF(0) - the membrane proton channel. CF(1) has five subunits: alpha(3), beta(3), gamma(1), delta(1), epsilon(1). CF(0) has three main subunits: a(1), b(2) and c(9-12). The alpha and beta chains form an alternating ring which encloses part of the gamma chain. CF(1) is attached to CF(0) by a central stalk formed by the gamma and epsilon chains, while a peripheral stalk is formed by the delta and b chains.

The protein localises to the cell inner membrane. In terms of biological role, key component of the proton channel; it plays a direct role in the translocation of protons across the membrane. The chain is ATP synthase subunit a from Legionella pneumophila (strain Corby).